The primary structure comprises 206 residues: Flavin reductase (NADPH) (206 aa).

NADP(+) is bound by residues Gly-10, Thr-12, Gly-13, Asn-14, Thr-15, Arg-35, Ser-38, and Arg-39. Position 42 is a phosphoserine (Ser-42). Residues Asp-54, Val-55, Leu-75, Gly-76, and Arg-78 each coordinate NADP(+). At Ser-82 the chain carries Phosphoserine. Met-87, Cys-109, His-132, His-153, and Ile-154 together coordinate NADP(+). Catalysis depends on Cys-109, which acts as the S-nitroso-cysteine intermediate; for S-nitroso-CoA-dependent nitrosyltransferase activity. Catalysis depends on Cys-188, which acts as the S-nitroso-cysteine intermediate; for S-nitroso-CoA-dependent nitrosyltransferase activity.

As to quaternary structure, monomer. At least expressed in the liver and erythrocyte.

It is found in the cytoplasm. It carries out the reaction reduced riboflavin + NADP(+) = riboflavin + NADPH + 2 H(+). It catalyses the reaction bilirubin IXbeta + NADP(+) = biliverdin IXbeta + NADPH + H(+). The catalysed reaction is FMNH2 + NAD(+) = FMN + NADH + 2 H(+). The enzyme catalyses FMNH2 + NADP(+) = FMN + NADPH + 2 H(+). It carries out the reaction S-nitroso-CoA + L-cysteinyl-[protein] = S-nitroso-L-cysteinyl-[protein] + CoA. It catalyses the reaction L-cysteinyl-[SCAN] + S-nitroso-CoA = S-nitroso-L-cysteinyl-[SCAN] + CoA. The catalysed reaction is S-nitroso-L-cysteinyl-[SCAN] + L-cysteinyl-[protein] = L-cysteinyl-[SCAN] + S-nitroso-L-cysteinyl-[protein]. Functionally, enzyme that can both act as a NAD(P)H-dependent reductase and a S-nitroso-CoA-dependent nitrosyltransferase. Promotes fetal heme degradation during development. Also expressed in adult tissues, where it acts as a regulator of hematopoiesis, intermediary metabolism (glutaminolysis, glycolysis, TCA cycle and pentose phosphate pathway) and insulin signaling. Has a broad specificity oxidoreductase activity by catalyzing the NAD(P)H-dependent reduction of a variety of flavins, such as riboflavin, FAD or FMN, biliverdins, methemoglobin and PQQ (pyrroloquinoline quinone). Contributes to fetal heme catabolism by catalyzing reduction of biliverdin IXbeta into bilirubin IXbeta in the liver. Biliverdin IXbeta, which constitutes the major heme catabolite in the fetus is not present in adult. Does not reduce bilirubin IXalpha. Can also reduce the complexed Fe(3+) iron to Fe(2+) in the presence of FMN and NADPH. Acts as a protein nitrosyltransferase by catalyzing nitrosylation of cysteine residues of target proteins, such as HMOX2, INSR and IRS1. S-nitroso-CoA-dependent nitrosyltransferase activity is mediated via a 'ping-pong' mechanism: BLVRB first associates with both S-nitroso-CoA and protein substrate, nitric oxide group is then transferred from S-nitroso-CoA to Cys-109 and Cys-188 residues of BLVRB and from S-nitroso-BLVRB to the protein substrate. Inhibits insulin signaling by mediating nitrosylation of INSR and IRS1, leading to their inhibition. The polypeptide is Flavin reductase (NADPH) (BLVRB) (Bos taurus (Bovine)).